The sequence spans 368 residues: Caffeine synthase 3 (368 aa).

An S-adenosyl-L-homocysteine-binding site is contributed by Y23. T30 is a binding site for caffeine. The S-adenosyl-L-homocysteine site is built by C65, N70, D102, L103, S137, and F138. The caffeine site is built by Y155, H158, and W159. A Mg(2+)-binding site is contributed by N176. R224 lines the caffeine pocket. Mg(2+)-binding residues include D262, F264, and N265. A caffeine-binding site is contributed by F320.

Belongs to the methyltransferase superfamily. Type-7 methyltransferase family. The cofactor is Mg(2+).

The enzyme catalyses theobromine + S-adenosyl-L-methionine = caffeine + S-adenosyl-L-homocysteine + H(+). The catalysed reaction is 7-methylxanthine + S-adenosyl-L-methionine = theobromine + S-adenosyl-L-homocysteine + H(+). It functions in the pathway alkaloid biosynthesis. Involved in the biosynthesis of caffeine. Catalyzes the conversion of 7-methylxanthine (7mX) to theobromine and of theobromine to caffeine. In Camellia sinensis (Tea plant), this protein is Caffeine synthase 3.